The primary structure comprises 100 residues: ATP synthase subunit c (100 aa).

Transmembrane regions (helical) follow at residues Phe-26–Met-46 and Met-71–Ile-91.

It belongs to the ATPase C chain family. In terms of assembly, F-type ATPases have 2 components, F(1) - the catalytic core - and F(0) - the membrane proton channel. F(1) has five subunits: alpha(3), beta(3), gamma(1), delta(1), epsilon(1). F(0) has three main subunits: a(1), b(2) and c(10-14). The alpha and beta chains form an alternating ring which encloses part of the gamma chain. F(1) is attached to F(0) by a central stalk formed by the gamma and epsilon chains, while a peripheral stalk is formed by the delta and b chains.

The protein localises to the cell inner membrane. Functionally, f(1)F(0) ATP synthase produces ATP from ADP in the presence of a proton or sodium gradient. F-type ATPases consist of two structural domains, F(1) containing the extramembraneous catalytic core and F(0) containing the membrane proton channel, linked together by a central stalk and a peripheral stalk. During catalysis, ATP synthesis in the catalytic domain of F(1) is coupled via a rotary mechanism of the central stalk subunits to proton translocation. Key component of the F(0) channel; it plays a direct role in translocation across the membrane. A homomeric c-ring of between 10-14 subunits forms the central stalk rotor element with the F(1) delta and epsilon subunits. This Campylobacter fetus subsp. fetus (strain 82-40) protein is ATP synthase subunit c.